Reading from the N-terminus, the 302-residue chain is N-acetylmuramic acid 6-phosphate etherase (302 aa).

Positions I57–K220 constitute an SIS domain. The active-site Proton donor is E85. E116 is a catalytic residue.

The protein belongs to the GCKR-like family. MurNAc-6-P etherase subfamily. In terms of assembly, homodimer.

It catalyses the reaction N-acetyl-D-muramate 6-phosphate + H2O = N-acetyl-D-glucosamine 6-phosphate + (R)-lactate. Its pathway is amino-sugar metabolism; N-acetylmuramate degradation. Specifically catalyzes the cleavage of the D-lactyl ether substituent of MurNAc 6-phosphate, producing GlcNAc 6-phosphate and D-lactate. The sequence is that of N-acetylmuramic acid 6-phosphate etherase from Rhodopirellula baltica (strain DSM 10527 / NCIMB 13988 / SH1).